The primary structure comprises 431 residues: Enolase (431 aa).

Glutamine 167 contacts (2R)-2-phosphoglycerate. Glutamate 209 (proton donor) is an active-site residue. 3 residues coordinate Mg(2+): aspartate 246, glutamate 289, and aspartate 316. (2R)-2-phosphoglycerate contacts are provided by lysine 341, arginine 370, serine 371, and lysine 392. The active-site Proton acceptor is lysine 341.

Belongs to the enolase family. Component of the RNA degradosome, a multiprotein complex involved in RNA processing and mRNA degradation. Mg(2+) serves as cofactor.

It is found in the cytoplasm. It localises to the secreted. The protein localises to the cell surface. The catalysed reaction is (2R)-2-phosphoglycerate = phosphoenolpyruvate + H2O. It participates in carbohydrate degradation; glycolysis; pyruvate from D-glyceraldehyde 3-phosphate: step 4/5. Functionally, catalyzes the reversible conversion of 2-phosphoglycerate (2-PG) into phosphoenolpyruvate (PEP). It is essential for the degradation of carbohydrates via glycolysis. In Shewanella oneidensis (strain ATCC 700550 / JCM 31522 / CIP 106686 / LMG 19005 / NCIMB 14063 / MR-1), this protein is Enolase.